Reading from the N-terminus, the 371-residue chain is Aurora kinase (371 aa).

2 stretches are compositionally biased toward polar residues: residues 1 to 15 (MSMK…SVSL) and 48 to 80 (RIST…YTTD). The interval 1 to 84 (MSMKQLETSM…SSYTTDPPSP (84 aa)) is disordered. The region spanning 99–350 (FEIGKALGKG…LKDMHKHPWI (252 aa)) is the Protein kinase domain. ATP is bound by residues 105-113 (LGKGKFGKV) and Lys128. Asp222 acts as the Proton acceptor in catalysis.

The protein belongs to the protein kinase superfamily. Ser/Thr protein kinase family. Aurora subfamily.

It localises to the nucleus. The protein resides in the cytoplasm. The protein localises to the cytoskeleton. Its subcellular location is the spindle. It is found in the chromosome. It localises to the centromere. The protein resides in the kinetochore. It catalyses the reaction L-seryl-[protein] + ATP = O-phospho-L-seryl-[protein] + ADP + H(+). The catalysed reaction is L-threonyl-[protein] + ATP = O-phospho-L-threonyl-[protein] + ADP + H(+). Its function is as follows. Component of the chromosomal passenger complex (CPC), a complex that acts as a key regulator of chromosome segregation and cytokinesis. Has a role in error-correction of aberrent kinetochore-microtubule attachments to ensure that sister kinetochores become bioriented and connect to opposite poles by promoting spindle assembly checkpoint signaling. This chain is Aurora kinase (IPL1), found in Yarrowia lipolytica (strain CLIB 122 / E 150) (Yeast).